Consider the following 65-residue polypeptide: Large ribosomal subunit protein bL33c (65 aa).

This sequence belongs to the bacterial ribosomal protein bL33 family.

Its subcellular location is the plastid. It localises to the chloroplast. The protein is Large ribosomal subunit protein bL33c of Psilotum nudum (Whisk fern).